The sequence spans 221 residues: Putative hemin import ATP-binding protein HrtA (221 aa).

One can recognise an ABC transporter domain in the interval 3-221 (LVVKDIVKNF…IELEDGKITD (219 aa)). 39 to 46 (GASGSGKT) provides a ligand contact to ATP.

It belongs to the ABC transporter superfamily. HrtA family. As to quaternary structure, the complex is composed of two ATP-binding proteins (HrtA), two transmembrane proteins (HrtB) and a solute-binding protein.

It is found in the cell membrane. Part of the ABC transporter complex hrt involved in hemin import. Responsible for energy coupling to the transport system. In Staphylococcus aureus (strain MRSA252), this protein is Putative hemin import ATP-binding protein HrtA (hrtA).